We begin with the raw amino-acid sequence, 84 residues long: Magnetosome protein MamG (84 aa).

The Cytoplasmic portion of the chain corresponds to 1-3 (MIK). Residues 4 to 24 (GIAGVGGTALGVGGGVAAPPV) traverse the membrane as a helical segment. Residues 25–40 (SAAAVGSTLLAGKGVC) lie on the Lumenal side of the membrane. Residues 41-48 (LGLGLGLG) are LG repeat. Residues 41-61 (LGLGLGLGAWGPVLLGVAGLA) traverse the membrane as a helical segment. Topologically, residues 62-84 (CAASLCDYLKNRKAQAEASAEPA) are cytoplasmic.

It belongs to the magnetosome MamG (TC 9.B.95) protein family.

The protein localises to the magnetosome membrane. Plays a role in regulating magnetite crystal size. The sequence is that of Magnetosome protein MamG from Magnetospirillum gryphiswaldense (strain DSM 6361 / JCM 21280 / NBRC 15271 / MSR-1).